Reading from the N-terminus, the 445-residue chain is Tubulin beta-2 chain (445 aa).

The short motif at 1–4 is the MREI motif element; that stretch reads MREI. Residues Gln11, Glu69, Ser138, Gly142, Thr143, Gly144, Asn204, and Asn226 each contribute to the GTP site. Glu69 is a binding site for Mg(2+). Positions 424-445 are disordered; it reads QYQDATADEQGEFEEEGEEDEA. Residues 429 to 445 show a composition bias toward acidic residues; it reads TADEQGEFEEEGEEDEA. Glu438 is subject to 5-glutamyl polyglutamate.

The protein belongs to the tubulin family. As to quaternary structure, dimer of alpha and beta chains. A typical microtubule is a hollow water-filled tube with an outer diameter of 25 nm and an inner diameter of 15 nM. Alpha-beta heterodimers associate head-to-tail to form protofilaments running lengthwise along the microtubule wall with the beta-tubulin subunit facing the microtubule plus end conferring a structural polarity. Microtubules usually have 13 protofilaments but different protofilament numbers can be found in some organisms and specialized cells. The cofactor is Mg(2+). In terms of processing, some glutamate residues at the C-terminus are polyglycylated, resulting in polyglycine chains on the gamma-carboxyl group. Glycylation is mainly limited to tubulin incorporated into axonemes (cilia and flagella) whereas glutamylation is prevalent in neuronal cells, centrioles, axonemes, and the mitotic spindle. Both modifications can coexist on the same protein on adjacent residues, and lowering polyglycylation levels increases polyglutamylation, and reciprocally. The precise function of polyglycylation is still unclear. Post-translationally, some glutamate residues at the C-terminus are polyglutamylated, resulting in polyglutamate chains on the gamma-carboxyl group. Polyglutamylation plays a key role in microtubule severing by spastin (SPAST). SPAST preferentially recognizes and acts on microtubules decorated with short polyglutamate tails: severing activity by SPAST increases as the number of glutamates per tubulin rises from one to eight, but decreases beyond this glutamylation threshold. In terms of tissue distribution, highly expressed in neuronal cells.

The protein localises to the cytoplasm. The protein resides in the cytoskeleton. Its function is as follows. Tubulin is the major constituent of microtubules, a cylinder consisting of laterally associated linear protofilaments composed of alpha- and beta-tubulin heterodimers. Microtubules grow by the addition of GTP-tubulin dimers to the microtubule end, where a stabilizing cap forms. Below the cap, tubulin dimers are in GDP-bound state, owing to GTPase activity of alpha-tubulin. The chain is Tubulin beta-2 chain from Gallus gallus (Chicken).